The primary structure comprises 173 residues: NADH-ubiquinone oxidoreductase chain 6 (173 aa).

6 helical membrane passes run 1-21 (MTYF…AVAS), 27-47 (YGVV…LSLG), 48-68 (VSFV…VVFV), 87-107 (VVGY…VGGF), 113-133 (FGVI…FGGV), and 139-159 (CGVG…FVVL).

It belongs to the complex I subunit 6 family.

It is found in the mitochondrion membrane. The catalysed reaction is a ubiquinone + NADH + 5 H(+)(in) = a ubiquinol + NAD(+) + 4 H(+)(out). Its function is as follows. Core subunit of the mitochondrial membrane respiratory chain NADH dehydrogenase (Complex I) that is believed to belong to the minimal assembly required for catalysis. Complex I functions in the transfer of electrons from NADH to the respiratory chain. The immediate electron acceptor for the enzyme is believed to be ubiquinone. The polypeptide is NADH-ubiquinone oxidoreductase chain 6 (MT-ND6) (Alle alle (Dovekie)).